The chain runs to 191 residues: Neuronal calcium sensor 1 (191 aa).

G2 carries the N-myristoyl glycine lipid modification. EF-hand domains follow at residues 24-59, 60-95, 96-131, and 144-179; these read ESEI…FPFG, DPSK…TSRG, TVEE…IYRM, and TPEK…DPTI. 14 residues coordinate Ca(2+): D73, N75, D77, E84, D109, D111, D113, Y115, E120, D157, N159, D161, Q163, and E168.

Belongs to the recoverin family.

It localises to the perikaryon. The protein resides in the cell projection. Its subcellular location is the growth cone. In terms of biological role, neuronal calcium sensor, regulator of G protein-coupled receptor phosphorylation in a calcium dependent manner. Regulates neurite extension and branching by activity-dependent Ca(2+) influx in growth cones. This is Neuronal calcium sensor 1 from Lymnaea stagnalis (Great pond snail).